The sequence spans 213 residues: N-(5'-phosphoribosyl)anthranilate isomerase (213 aa).

This sequence belongs to the TrpF family.

The enzyme catalyses N-(5-phospho-beta-D-ribosyl)anthranilate = 1-(2-carboxyphenylamino)-1-deoxy-D-ribulose 5-phosphate. It participates in amino-acid biosynthesis; L-tryptophan biosynthesis; L-tryptophan from chorismate: step 3/5. This is N-(5'-phosphoribosyl)anthranilate isomerase from Caulobacter sp. (strain K31).